Consider the following 739-residue polypeptide: Eukaryotic translation initiation factor 3 subunit B (739 aa).

The sufficient for interaction with HCR1 and TIF32 stretch occupies residues 1–98 (MSINEEDYLQ…LFIQFKSTES (98 aa)). Residues 1–224 (MSINEEDYLQ…GIQSWGGANF (224 aa)) are sufficient for interaction with PIC8. In terms of domain architecture, RRM spans 37–124 (NYIIVDGAPI…HRLLVNKLSD (88 aa)). WD repeat units lie at residues 190 to 229 (PRKGFTSKYAKFSPKGTYLFSIHPQGIQSWGGANFNSIKR), 231 to 293 (FHQQ…RTFA), 301 to 339 (QKEMPWPLVKWSYDDKYCARQGPDALAIYETESNFQLLD), 343 to 385 (VKVD…QTAR), 453 to 502 (ELKD…KGGV), 537 to 579 (IENK…ETNK), and 592 to 630 (DKFSGMTNISWDPSGRFVAAWSTSWLHAIENGYRLYEFT).

Belongs to the eIF-3 subunit B family. In terms of assembly, component of the eukaryotic translation initiation factor 3 (eIF-3) complex.

It localises to the cytoplasm. Its function is as follows. RNA-binding component of the eukaryotic translation initiation factor 3 (eIF-3) complex, which is involved in protein synthesis of a specialized repertoire of mRNAs and, together with other initiation factors, stimulates binding of mRNA and methionyl-tRNAi to the 40S ribosome. The eIF-3 complex specifically targets and initiates translation of a subset of mRNAs involved in cell proliferation. The sequence is that of Eukaryotic translation initiation factor 3 subunit B from Candida albicans (strain SC5314 / ATCC MYA-2876) (Yeast).